Consider the following 156-residue polypeptide: Ribonuclease pancreatic (156 aa).

The signal sequence occupies residues 1–28 (MALEKSLVLLPLLVLILLVLGWVQPSLG). Residues K35 and R38 each coordinate substrate. H40 serves as the catalytic Proton acceptor. N50 and N62 each carry an N-linked (GlcNAc...) asparagine glycan. Intrachain disulfides connect C54–C112, C68–C123, C86–C138, and C93–C100. Residues 69-73 (KPVNT) and K94 each bind substrate. A glycan (N-linked (GlcNAc...) asparagine) is linked at N104. Substrate is bound at residue R113. The active-site Proton donor is H147.

The protein belongs to the pancreatic ribonuclease family. Monomer. Interacts with and forms tight 1:1 complexes with RNH1. Dimerization of two such complexes may occur. Interaction with RNH1 inhibits this protein. As to expression, pancreas and other tissues and body fluids (indicating it may have other physiological functions besides its role in digestion).

It is found in the secreted. It carries out the reaction an [RNA] containing cytidine + H2O = an [RNA]-3'-cytidine-3'-phosphate + a 5'-hydroxy-ribonucleotide-3'-[RNA].. It catalyses the reaction an [RNA] containing uridine + H2O = an [RNA]-3'-uridine-3'-phosphate + a 5'-hydroxy-ribonucleotide-3'-[RNA].. In terms of biological role, endonuclease that catalyzes the cleavage of RNA on the 3' side of pyrimidine nucleotides. Acts on single-stranded and double-stranded RNA. The protein is Ribonuclease pancreatic (RNASE1) of Pongo pygmaeus (Bornean orangutan).